The chain runs to 334 residues: Transcription initiation factor IIB (334 aa).

Residues Thr-34–Asp-65 form a TFIIB-type zinc finger. Zn(2+) is bound by residues Cys-38, Cys-41, Cys-57, and Cys-60. 2 tandem repeats follow at residues Ser-151–Leu-234 and Asp-245–Glu-326.

Belongs to the TFIIB family.

In terms of biological role, stabilizes TBP binding to an archaeal box-A promoter. Also responsible for recruiting RNA polymerase II to the pre-initiation complex (DNA-TBP-TFIIB). The chain is Transcription initiation factor IIB from Methanosphaerula palustris (strain ATCC BAA-1556 / DSM 19958 / E1-9c).